We begin with the raw amino-acid sequence, 414 residues long: Mannan endo-1,4-beta-mannosidase 3 (414 aa).

The N-terminal stretch at 1-19 is a signal peptide; the sequence is MKCLCFVVLLAILIAQNSS. Residues Asn-17 and Asn-75 are each glycosylated (N-linked (GlcNAc...) asparagine). A substrate-binding site is contributed by Trp-87. Asn-133 and Asn-153 each carry an N-linked (GlcNAc...) asparagine glycan. Asn-202 provides a ligand contact to substrate. Glu-203 serves as the catalytic Proton donor. Tyr-283 contributes to the substrate binding site. Glu-323 serves as the catalytic Nucleophile. A glycan (N-linked (GlcNAc...) asparagine) is linked at Asn-343. Trp-365 is a binding site for substrate. An N-linked (GlcNAc...) asparagine glycan is attached at Asn-386.

It belongs to the glycosyl hydrolase 5 (cellulase A) family. As to expression, expressed in leaves, flowers, siliques and seeds.

It localises to the secreted. It carries out the reaction Random hydrolysis of (1-&gt;4)-beta-D-mannosidic linkages in mannans, galactomannans and glucomannans.. In Arabidopsis thaliana (Mouse-ear cress), this protein is Mannan endo-1,4-beta-mannosidase 3 (MAN3).